The sequence spans 626 residues: MVKFAIINTLTVNETWAKLKSFGVMESSIEGSSESTTVTTSPSRRVRELLALCFSSVEEAGGFQDFESFVTELVSCLDSLYENVALDANNELENDVIEEVLDEILKVLSSPQMDQDVIDALSFHLPKVTSKFADISSRCLQLVEEIVDRFVEACNPRDMLSILCEALDAARCYHSASTCSTPLLHGLSKVFILIQRRHYEQLKVAVPIVLNVLKDISLETDVQVEDLFDKALGIASSIRDVSSKLNNEEEAKVRCLLCLYVIQITAIISVSIRDKAASCIPLVIQLEPFLTSCGLTHLGLITGNDTEKLMSTVAGDDDEFITSFPDISLGASLLFICAKISHEVAEAANAVLGSVVDELQNNPVKRWQAYGMLKYILSSGDLLWEFKRHAIEFLLDITKGVTSSQCNDEQIDCSDYTPGIYATLQAVTLLIMYAPDADLRKKTFEALKRVLSDIPAPHRFDVLRALVTNSRSPSMTAILLGLVKDSMSKSSLQDTDCAAVDTHVIELVELVLRPPQGGPPLLPDQSDAILAALNLYRFALLFESRECEAGKERSKVGSDILSKKNLEKAYKEWLLPLRTLVSCSIAENLKEDHGQESSLDDVGLLNPIELVLYRCIELVEEKLKSH.

Widely expressed. Expressed throughout the root tip, stele and lateral primordia. Also expressed in the shoots.

It is found in the nucleus. Its function is as follows. Required for the initiation of lateral roots independent from auxin signaling. May function in maintaining the pericycle in the mitotically competent state needed for lateral root formation. The chain is Aberrant root formation protein 4 (ALF4) from Arabidopsis thaliana (Mouse-ear cress).